Reading from the N-terminus, the 249-residue chain is 2,3-bisphosphoglycerate-dependent phosphoglycerate mutase (249 aa).

Residues Arg-11 to Asn-18, Thr-24 to Gly-25, Arg-63, Glu-90 to Tyr-93, Lys-101, Arg-117 to Arg-118, and Gly-184 to Asn-185 contribute to the substrate site. His-12 functions as the Tele-phosphohistidine intermediate in the catalytic mechanism. Glu-90 (proton donor/acceptor) is an active-site residue.

The protein belongs to the phosphoglycerate mutase family. BPG-dependent PGAM subfamily.

It carries out the reaction (2R)-2-phosphoglycerate = (2R)-3-phosphoglycerate. It functions in the pathway carbohydrate degradation; glycolysis; pyruvate from D-glyceraldehyde 3-phosphate: step 3/5. Catalyzes the interconversion of 2-phosphoglycerate and 3-phosphoglycerate. This chain is 2,3-bisphosphoglycerate-dependent phosphoglycerate mutase, found in Mycobacterium bovis (strain BCG / Pasteur 1173P2).